The chain runs to 325 residues: tRNA N6-adenosine threonylcarbamoyltransferase (325 aa).

Fe cation contacts are provided by H107 and H111. Substrate-binding positions include 129-133 (LVSGG), D162, G175, and N265. D293 is a binding site for Fe cation.

Belongs to the KAE1 / TsaD family. The cofactor is Fe(2+).

The protein resides in the cytoplasm. The catalysed reaction is L-threonylcarbamoyladenylate + adenosine(37) in tRNA = N(6)-L-threonylcarbamoyladenosine(37) in tRNA + AMP + H(+). Its function is as follows. Required for the formation of a threonylcarbamoyl group on adenosine at position 37 (t(6)A37) in tRNAs that read codons beginning with adenine. Is involved in the transfer of the threonylcarbamoyl moiety of threonylcarbamoyl-AMP (TC-AMP) to the N6 group of A37, together with TsaE and TsaB. TsaD likely plays a direct catalytic role in this reaction. The protein is tRNA N6-adenosine threonylcarbamoyltransferase of Sulfurimonas denitrificans (strain ATCC 33889 / DSM 1251) (Thiomicrospira denitrificans (strain ATCC 33889 / DSM 1251)).